A 101-amino-acid polypeptide reads, in one-letter code: Large ribosomal subunit protein bL21 (101 aa).

It belongs to the bacterial ribosomal protein bL21 family. As to quaternary structure, part of the 50S ribosomal subunit. Contacts protein L20.

Functionally, this protein binds to 23S rRNA in the presence of protein L20. This is Large ribosomal subunit protein bL21 from Corynebacterium efficiens (strain DSM 44549 / YS-314 / AJ 12310 / JCM 11189 / NBRC 100395).